The chain runs to 540 residues: CTP synthase (540 aa).

Residues 1-273 (MNNKDLKTKF…DDFILQHFKL (273 aa)) are amidoligase domain. Position 19 (Ser19) interacts with CTP. UTP is bound at residue Ser19. 20-25 (SLGKGI) contacts ATP. Residue Tyr60 coordinates L-glutamine. An ATP-binding site is contributed by Asp77. 2 residues coordinate Mg(2+): Asp77 and Glu147. CTP contacts are provided by residues 154-156 (DIE), 194-199 (KTKPTQ), and Lys230. Residues 194–199 (KTKPTQ) and Lys230 contribute to the UTP site. Residues 306–539 (YIVLHDAYLS…VEASLLNQKN (234 aa)) form the Glutamine amidotransferase type-1 domain. Gly361 contributes to the L-glutamine binding site. The Nucleophile; for glutamine hydrolysis role is filled by Cys388. Residues 389–392 (LGMQ), Glu412, and Arg466 each bind L-glutamine. Catalysis depends on residues His512 and Glu514.

This sequence belongs to the CTP synthase family. Homotetramer.

The enzyme catalyses UTP + L-glutamine + ATP + H2O = CTP + L-glutamate + ADP + phosphate + 2 H(+). It catalyses the reaction L-glutamine + H2O = L-glutamate + NH4(+). The catalysed reaction is UTP + NH4(+) + ATP = CTP + ADP + phosphate + 2 H(+). It functions in the pathway pyrimidine metabolism; CTP biosynthesis via de novo pathway; CTP from UDP: step 2/2. With respect to regulation, allosterically activated by GTP, when glutamine is the substrate; GTP has no effect on the reaction when ammonia is the substrate. The allosteric effector GTP functions by stabilizing the protein conformation that binds the tetrahedral intermediate(s) formed during glutamine hydrolysis. Inhibited by the product CTP, via allosteric rather than competitive inhibition. Catalyzes the ATP-dependent amination of UTP to CTP with either L-glutamine or ammonia as the source of nitrogen. Regulates intracellular CTP levels through interactions with the four ribonucleotide triphosphates. This is CTP synthase from Onion yellows phytoplasma (strain OY-M).